The chain runs to 457 residues: Cysteine--tRNA ligase (457 aa).

Cysteine 30 contacts Zn(2+). A 'HIGH' region motif is present at residues 32-42 (PTVYDRAHLGN). Zn(2+)-binding residues include cysteine 213, histidine 238, and glutamate 242. Residues 271–275 (KMSKS) carry the 'KMSKS' region motif. ATP is bound at residue lysine 274.

It belongs to the class-I aminoacyl-tRNA synthetase family. Monomer. Requires Zn(2+) as cofactor.

The protein resides in the cytoplasm. It catalyses the reaction tRNA(Cys) + L-cysteine + ATP = L-cysteinyl-tRNA(Cys) + AMP + diphosphate. The sequence is that of Cysteine--tRNA ligase from Ruegeria sp. (strain TM1040) (Silicibacter sp.).